A 174-amino-acid chain; its full sequence is Shikimate kinase 2 (174 aa).

An ATP-binding site is contributed by 12 to 17 (GCGKTT). Mg(2+)-binding residues include T16 and D32. 3 residues coordinate substrate: D34, R58, and G79. The tract at residues 112–126 (QAAPEEDLRPTLTGK) is LID domain. R120 is an ATP binding site. Residue R139 participates in substrate binding.

Belongs to the shikimate kinase family. AroL subfamily. As to quaternary structure, monomer. The cofactor is Mg(2+).

It is found in the cytoplasm. The catalysed reaction is shikimate + ATP = 3-phosphoshikimate + ADP + H(+). It functions in the pathway metabolic intermediate biosynthesis; chorismate biosynthesis; chorismate from D-erythrose 4-phosphate and phosphoenolpyruvate: step 5/7. Its function is as follows. Catalyzes the specific phosphorylation of the 3-hydroxyl group of shikimic acid using ATP as a cosubstrate. This is Shikimate kinase 2 from Escherichia coli O1:K1 / APEC.